The primary structure comprises 211 residues: Uridine kinase (211 aa).

ATP is bound at residue 13-20 (GASASGKS).

Belongs to the uridine kinase family.

It is found in the cytoplasm. It carries out the reaction uridine + ATP = UMP + ADP + H(+). The catalysed reaction is cytidine + ATP = CMP + ADP + H(+). It participates in pyrimidine metabolism; CTP biosynthesis via salvage pathway; CTP from cytidine: step 1/3. The protein operates within pyrimidine metabolism; UMP biosynthesis via salvage pathway; UMP from uridine: step 1/1. The chain is Uridine kinase from Shewanella pealeana (strain ATCC 700345 / ANG-SQ1).